Consider the following 548-residue polypeptide: Chaperonin GroEL (548 aa).

Residues T30–P33, K51, D87–T91, G415, N479–A481, and D495 contribute to the ATP site.

It belongs to the chaperonin (HSP60) family. As to quaternary structure, forms a cylinder of 14 subunits composed of two heptameric rings stacked back-to-back. Interacts with the co-chaperonin GroES.

Its subcellular location is the cytoplasm. The enzyme catalyses ATP + H2O + a folded polypeptide = ADP + phosphate + an unfolded polypeptide.. Functionally, together with its co-chaperonin GroES, plays an essential role in assisting protein folding. The GroEL-GroES system forms a nano-cage that allows encapsulation of the non-native substrate proteins and provides a physical environment optimized to promote and accelerate protein folding. This Methylibium petroleiphilum (strain ATCC BAA-1232 / LMG 22953 / PM1) protein is Chaperonin GroEL.